A 533-amino-acid chain; its full sequence is Probable bifunctional tRNA threonylcarbamoyladenosine biosynthesis protein (533 aa).

The kae1 stretch occupies residues 1 to 329 (MTRVLGIEGT…FRPDEVPVSW (329 aa)). Fe cation contacts are provided by histidine 113 and histidine 117. L-threonylcarbamoyladenylate-binding positions include 134-138 (NASGA), aspartate 166, glycine 179, glutamate 183, and asparagine 262. Aspartate 290 serves as a coordination point for Fe cation. The Protein kinase domain occupies 338-533 (PVPTDERRQG…REIETRGRYQ (196 aa)). Residues 345 to 352 (RQGAEAVV) and lysine 363 each bind ATP. Residue aspartate 452 is the Proton acceptor; for kinase activity of the active site.

The protein in the N-terminal section; belongs to the KAE1 / TsaD family. This sequence in the C-terminal section; belongs to the protein kinase superfamily. Tyr protein kinase family. BUD32 subfamily. As to quaternary structure, component of the KEOPS complex that consists of Kae1, Bud32, Cgi121 and Pcc1; the whole complex dimerizes. Requires Fe(2+) as cofactor.

Its subcellular location is the cytoplasm. The catalysed reaction is L-seryl-[protein] + ATP = O-phospho-L-seryl-[protein] + ADP + H(+). It catalyses the reaction L-threonyl-[protein] + ATP = O-phospho-L-threonyl-[protein] + ADP + H(+). The enzyme catalyses L-threonylcarbamoyladenylate + adenosine(37) in tRNA = N(6)-L-threonylcarbamoyladenosine(37) in tRNA + AMP + H(+). In terms of biological role, required for the formation of a threonylcarbamoyl group on adenosine at position 37 (t(6)A37) in tRNAs that read codons beginning with adenine. Is a component of the KEOPS complex that is probably involved in the transfer of the threonylcarbamoyl moiety of threonylcarbamoyl-AMP (TC-AMP) to the N6 group of A37. The Kae1 domain likely plays a direct catalytic role in this reaction. The Bud32 domain probably displays kinase activity that regulates Kae1 function. This is Probable bifunctional tRNA threonylcarbamoyladenosine biosynthesis protein from Natronomonas pharaonis (strain ATCC 35678 / DSM 2160 / CIP 103997 / JCM 8858 / NBRC 14720 / NCIMB 2260 / Gabara) (Halobacterium pharaonis).